We begin with the raw amino-acid sequence, 278 residues long: Complement C1q tumor necrosis factor-related protein 6 (278 aa).

The signal sequence occupies residues 1-46; that stretch reads MQWLRVRESPGEATGHRVTMGTAALGPVWAALLLFLLMCEIPMVEL. N91 is a glycosylation site (N-linked (GlcNAc...) asparagine). Residues 97 to 138 enclose the Collagen-like domain; sequence GDKGDPGPMGLPGYMGREGPQGEPGPQGSKGDKGEMGSPGAP. The tract at residues 99 to 135 is disordered; the sequence is KGDPGPMGLPGYMGREGPQGEPGPQGSKGDKGEMGSP. The C1q domain occupies 139-259; it reads CQKRFFAFSV…KRQRENAIYS (121 aa).

The protein localises to the secreted. This is Complement C1q tumor necrosis factor-related protein 6 (C1QTNF6) from Homo sapiens (Human).